The chain runs to 425 residues: Dihydroorotase (425 aa).

Residues H56 and H58 each coordinate Zn(2+). Substrate-binding positions include 58-60 and N90; that span reads HYR. D148, H175, and H228 together coordinate Zn(2+). N274 is a substrate binding site. D301 lines the Zn(2+) pocket. D301 is an active-site residue. Substrate is bound by residues H305 and 319-320; that span reads FG.

It belongs to the metallo-dependent hydrolases superfamily. DHOase family. Class I DHOase subfamily. It depends on Zn(2+) as a cofactor.

The catalysed reaction is (S)-dihydroorotate + H2O = N-carbamoyl-L-aspartate + H(+). It functions in the pathway pyrimidine metabolism; UMP biosynthesis via de novo pathway; (S)-dihydroorotate from bicarbonate: step 3/3. Its function is as follows. Catalyzes the reversible cyclization of carbamoyl aspartate to dihydroorotate. The protein is Dihydroorotase of Lactobacillus gasseri (strain ATCC 33323 / DSM 20243 / BCRC 14619 / CIP 102991 / JCM 1131 / KCTC 3163 / NCIMB 11718 / NCTC 13722 / AM63).